The chain runs to 77 residues: Small ribosomal subunit protein bS20 (77 aa).

This sequence belongs to the bacterial ribosomal protein bS20 family.

Binds directly to 16S ribosomal RNA. This Streptococcus agalactiae serotype Ia (strain ATCC 27591 / A909 / CDC SS700) protein is Small ribosomal subunit protein bS20.